The chain runs to 267 residues: Type II pantothenate kinase (267 aa).

6–13 (DAGGTLIK) is an ATP binding site. Catalysis depends on Glu70, which acts as the Proton acceptor. Residues Thr99, 121-125 (GGMIQ), Tyr137, and Ser225 contribute to the ATP site.

Belongs to the type II pantothenate kinase family. As to quaternary structure, homodimer.

It is found in the cytoplasm. It catalyses the reaction (R)-pantothenate + ATP = (R)-4'-phosphopantothenate + ADP + H(+). The protein operates within cofactor biosynthesis; coenzyme A biosynthesis; CoA from (R)-pantothenate: step 1/5. Functionally, catalyzes the phosphorylation of pantothenate (Pan), the first step in CoA biosynthesis. The sequence is that of Type II pantothenate kinase from Staphylococcus aureus (strain Mu50 / ATCC 700699).